Consider the following 101-residue polypeptide: NADH-quinone oxidoreductase subunit K (101 aa).

3 helical membrane-spanning segments follow: residues 4–24, 30–50, and 61–81; these read LSHY…GIFL, IVLL…FIAF, and IFVF…LAIL.

This sequence belongs to the complex I subunit 4L family. As to quaternary structure, NDH-1 is composed of 14 different subunits. Subunits NuoA, H, J, K, L, M, N constitute the membrane sector of the complex.

It localises to the cell inner membrane. It carries out the reaction a quinone + NADH + 5 H(+)(in) = a quinol + NAD(+) + 4 H(+)(out). Functionally, NDH-1 shuttles electrons from NADH, via FMN and iron-sulfur (Fe-S) centers, to quinones in the respiratory chain. The immediate electron acceptor for the enzyme in this species is believed to be ubiquinone. Couples the redox reaction to proton translocation (for every two electrons transferred, four hydrogen ions are translocated across the cytoplasmic membrane), and thus conserves the redox energy in a proton gradient. This is NADH-quinone oxidoreductase subunit K from Aromatoleum aromaticum (strain DSM 19018 / LMG 30748 / EbN1) (Azoarcus sp. (strain EbN1)).